We begin with the raw amino-acid sequence, 201 residues long: 3-isopropylmalate dehydratase small subunit (201 aa).

This sequence belongs to the LeuD family. LeuD type 1 subfamily. In terms of assembly, heterodimer of LeuC and LeuD.

It catalyses the reaction (2R,3S)-3-isopropylmalate = (2S)-2-isopropylmalate. It participates in amino-acid biosynthesis; L-leucine biosynthesis; L-leucine from 3-methyl-2-oxobutanoate: step 2/4. In terms of biological role, catalyzes the isomerization between 2-isopropylmalate and 3-isopropylmalate, via the formation of 2-isopropylmaleate. In Buchnera aphidicola subsp. Baizongia pistaciae (strain Bp), this protein is 3-isopropylmalate dehydratase small subunit.